Here is a 532-residue protein sequence, read N- to C-terminus: Peptide chain release factor 3 (532 aa).

Residues 10-283 (QKRRTFAIIS…GILDWAPSPV (274 aa)) form the tr-type G domain. GTP contacts are provided by residues 19 to 26 (SHPDAGKT), 87 to 91 (DTPGH), and 141 to 144 (NKLD).

This sequence belongs to the TRAFAC class translation factor GTPase superfamily. Classic translation factor GTPase family. PrfC subfamily.

The protein localises to the cytoplasm. Increases the formation of ribosomal termination complexes and stimulates activities of RF-1 and RF-2. It binds guanine nucleotides and has strong preference for UGA stop codons. It may interact directly with the ribosome. The stimulation of RF-1 and RF-2 is significantly reduced by GTP and GDP, but not by GMP. The polypeptide is Peptide chain release factor 3 (prfC) (Buchnera aphidicola subsp. Baizongia pistaciae (strain Bp)).